A 938-amino-acid chain; its full sequence is Isoleucine--tRNA ligase (938 aa).

A 'HIGH' region motif is present at residues 58–68; it reads PYANGSIHIGH. Position 561 (Glu-561) interacts with L-isoleucyl-5'-AMP. Residues 602–606 carry the 'KMSKS' region motif; that stretch reads KMSKS. Lys-605 serves as a coordination point for ATP. Zn(2+) contacts are provided by Cys-901, Cys-904, Cys-921, and Cys-924.

Belongs to the class-I aminoacyl-tRNA synthetase family. IleS type 1 subfamily. In terms of assembly, monomer. Zn(2+) is required as a cofactor.

Its subcellular location is the cytoplasm. The enzyme catalyses tRNA(Ile) + L-isoleucine + ATP = L-isoleucyl-tRNA(Ile) + AMP + diphosphate. Its function is as follows. Catalyzes the attachment of isoleucine to tRNA(Ile). As IleRS can inadvertently accommodate and process structurally similar amino acids such as valine, to avoid such errors it has two additional distinct tRNA(Ile)-dependent editing activities. One activity is designated as 'pretransfer' editing and involves the hydrolysis of activated Val-AMP. The other activity is designated 'posttransfer' editing and involves deacylation of mischarged Val-tRNA(Ile). This chain is Isoleucine--tRNA ligase, found in Sodalis glossinidius (strain morsitans).